The sequence spans 305 residues: Endonuclease 1 (305 aa).

A signal peptide spans 1-28 (MASAFRSSTRLILVLGILILCSVSSVRS). A divalent metal cation-binding residues include Trp-29 and His-34. 29 to 34 (WSKEGH) provides a ligand contact to substrate. Cys-38 and Cys-69 form a disulfide bridge. Residues Asp-73 and His-88 each coordinate a divalent metal cation. Residues 73 to 79 (DQIRHWY), 88 to 91 (HYID), and 98 to 103 (SYEYSR) each bind substrate. Cystine bridges form between Cys-97-Cys-249, Cys-105-Cys-115, and Cys-230-Cys-236. The substrate site is built by Asn-122 and Tyr-139. N-linked (GlcNAc...) asparagine glycosylation occurs at Asn-122. Asn-140 carries an N-linked (GlcNAc...) asparagine glycan. A divalent metal cation is bound by residues His-150, Asp-154, His-160, His-184, and Asp-188. A substrate binding region spans residues 150–199 (HFMGDIHQPMHVGFTSDEGGNTIDLRWYKHKSNLHHVWDREIILTALKEN). Asn-214 carries an N-linked (GlcNAc...) asparagine glycan. Positions 287 to 305 (MILNRVFSDDHAIAGVAAT) are cleaved as a propeptide — removed in mature form.

It belongs to the nuclease type I family. Monomer. Mn(2+) serves as cofactor. Requires Ca(2+) as cofactor. As to expression, mostly expressed in flowers and during leaf and stem senescence, and, to a lower extent, detectable at low levels in roots, leaves, and stems. Particularly expressed in senescing tissues in a NAC92/ORE1-dependent manner.

The catalysed reaction is Endonucleolytic cleavage to 5'-phosphomononucleotide and 5'-phosphooligonucleotide end-products.. Endonuclease that can use RNA, single-stranded and double-stranded DNA as substrates. Hydrolyzes single-stranded DNA and RNA without apparent specificity for bases during senescence. Endonuclease that recognizes and cleaves all types of mismatches with high efficiency, including heteroduplex double-stranded DNA. Maybe involved in programmed cell death (PCD) and senescence. This chain is Endonuclease 1, found in Arabidopsis thaliana (Mouse-ear cress).